The sequence spans 200 residues: Glutathione S-transferase 1-1 (200 aa).

The region spanning 1 to 73 (GSSPCRSVIM…YLVEKYGKTD (73 aa)) is the GST N-terminal domain. Glutathione contacts are provided by residues Ser-2, 43–45 (HTI), and 57–59 (ESR). Residues 79-200 (CPKKRAVINQ…AGCLEFKKFF (122 aa)) enclose the GST C-terminal domain.

Belongs to the GST superfamily. Theta family. In terms of assembly, homodimer.

It catalyses the reaction RX + glutathione = an S-substituted glutathione + a halide anion + H(+). It carries out the reaction 1,1,1-trichloro-2,2-bis(4-chlorophenyl)ethane = 1,1-dichloro-2,2-bis(4-chlorophenyl)ethylene + chloride + H(+). Conjugation of reduced glutathione to a wide number of exogenous and endogenous hydrophobic electrophiles. Has DDT dehydrochlorinase activity. The protein is Glutathione S-transferase 1-1 (GstD1) of Drosophila mauritiana (Fruit fly).